Here is a 73-residue protein sequence, read N- to C-terminus: ATP synthase subunit 9, mitochondrial (73 aa).

Helical transmembrane passes span 12 to 32 and 50 to 70; these read VAALGLIGAGIGVGIVFAALI and ILGFALSEATGLFALMVSFLL.

Belongs to the ATPase C chain family. F-type ATPases have 2 components, CF(1) - the catalytic core - and CF(0) - the membrane proton channel. CF(1) has five subunits: alpha(3), beta(3), gamma(1), delta(1), epsilon(1). CF(0) has three main subunits: a, b and c.

It localises to the mitochondrion inner membrane. Its function is as follows. Mitochondrial membrane ATP synthase (F(1)F(0) ATP synthase or Complex V) produces ATP from ADP in the presence of a proton gradient across the membrane which is generated by electron transport complexes of the respiratory chain. F-type ATPases consist of two structural domains, F(1) - containing the extramembraneous catalytic core and F(0) - containing the membrane proton channel, linked together by a central stalk and a peripheral stalk. During catalysis, ATP synthesis in the catalytic domain of F(1) is coupled via a rotary mechanism of the central stalk subunits to proton translocation. Part of the complex F(0) domain. A homomeric c-ring of probably 10 subunits is part of the complex rotary element. This chain is ATP synthase subunit 9, mitochondrial (ATP9), found in Mycosarcoma maydis (Corn smut fungus).